The primary structure comprises 218 residues: Small ribosomal subunit protein uS3c (218 aa).

The KH type-2 domain occupies 47-118 (VQKHMRISSG…RLNIAIARVA (72 aa)).

Belongs to the universal ribosomal protein uS3 family. As to quaternary structure, part of the 30S ribosomal subunit.

The protein resides in the plastid. The protein localises to the chloroplast. The sequence is that of Small ribosomal subunit protein uS3c (rps3) from Nymphaea alba (White water-lily).